The chain runs to 105 residues: uncharacterized protein (105 aa).

This is an uncharacterized protein from Homo sapiens (Human).